An 801-amino-acid chain; its full sequence is MPYNHREIEPKWQARWEQDNAFVTTEDPEKEGFYALDMFPYPSGAGLHVGHPEGYTATDILARMKRMQGYNVLHPMGWDAFGLPAEQYALDTGNDPREFTAQNIETFKRQLKDLGFSYDWDREINTTDPKYYKWTQWIFTKLYEQGLAFVDEVAVNWCPALGTVLANEEVIDGLSERGNHPVVRVPMRQWVLKITEYADRLLEDLDELDWPESVKEMQRNWIGKSEGAEIDFTIDGHKKQVTVFTTRPDTVFGATYLVLAPEHPFVTDITTEDHEEAVKAYIASVQTKSDLERTDLAKEKTGVFTGAFAVNPISGERLPIWIADYVLATYGTGAIMAVPAHDERDHEFAKQFDLPIIEVVKGGNVDEVAYTGEGEHVNSQMLDGLSKQEAIETIIAELETNQVGRKKITFRLRDWLFSRQRYWGEPIPVVHMEDGTMKTLDKSELPLELPMIPEIKPSGTGESPLALAEDWLDYTDPVTGLKGRRETNTMPQWGGSCWYYLRFIDPHNEEAIADPEKLKYWLPVDIYIGGAEHAVLHLLYARFWHKVLYDIGVVPTKEPFQKLYNQGMILGENNEKMSKSRGNVINPDEIVKSHGADTLRLYEMFMGPLDASVSWSENGLDGARRFLDRVWRLFERTADIQDVTTVDADFERVYHQTVKKVTEDFTNIQFNTGISQLMVFVNEANKQPVLPRHFLRGFIQLLTPVAPHLGEELWEQLGFEDTLTYAAWPTFDETKLVSDTMEFVIQVNGKVRSKLVISMEATKEEIEALAFADEKTQEWIGDKTVRKVIVVPKKLINIVAN.

Positions 40–51 match the 'HIGH' region motif; it reads PYPSGAGLHVGH. The 'KMSKS' region signature appears at 576–580; it reads KMSKS. Lys579 is an ATP binding site.

The protein belongs to the class-I aminoacyl-tRNA synthetase family.

It localises to the cytoplasm. The enzyme catalyses tRNA(Leu) + L-leucine + ATP = L-leucyl-tRNA(Leu) + AMP + diphosphate. In Exiguobacterium sibiricum (strain DSM 17290 / CCUG 55495 / CIP 109462 / JCM 13490 / 255-15), this protein is Leucine--tRNA ligase.